A 464-amino-acid chain; its full sequence is tRNA modification GTPase MnmE (464 aa).

Residues arginine 26, glutamate 92, and arginine 131 each contribute to the (6S)-5-formyl-5,6,7,8-tetrahydrofolate site. The TrmE-type G domain occupies glycine 227–serine 385. Asparagine 237 lines the K(+) pocket. GTP contacts are provided by residues asparagine 237–serine 242, serine 256–threonine 262, and aspartate 281–glycine 284. Position 241 (serine 241) interacts with Mg(2+). Residues serine 256, isoleucine 258, and threonine 261 each coordinate K(+). Threonine 262 contributes to the Mg(2+) binding site. Lysine 464 is a binding site for (6S)-5-formyl-5,6,7,8-tetrahydrofolate.

The protein belongs to the TRAFAC class TrmE-Era-EngA-EngB-Septin-like GTPase superfamily. TrmE GTPase family. In terms of assembly, homodimer. Heterotetramer of two MnmE and two MnmG subunits. It depends on K(+) as a cofactor.

The protein localises to the cytoplasm. Its function is as follows. Exhibits a very high intrinsic GTPase hydrolysis rate. Involved in the addition of a carboxymethylaminomethyl (cmnm) group at the wobble position (U34) of certain tRNAs, forming tRNA-cmnm(5)s(2)U34. In Brachyspira hyodysenteriae (strain ATCC 49526 / WA1), this protein is tRNA modification GTPase MnmE.